The sequence spans 319 residues: Acetyl-coenzyme A carboxylase carboxyl transferase subunit alpha (319 aa).

In terms of domain architecture, CoA carboxyltransferase C-terminal spans 35–292 (EISKLMRRLV…KKTIAEALAE (258 aa)).

This sequence belongs to the AccA family. In terms of assembly, acetyl-CoA carboxylase is a heterohexamer composed of biotin carboxyl carrier protein (AccB), biotin carboxylase (AccC) and two subunits each of ACCase subunit alpha (AccA) and ACCase subunit beta (AccD).

The protein localises to the cytoplasm. It carries out the reaction N(6)-carboxybiotinyl-L-lysyl-[protein] + acetyl-CoA = N(6)-biotinyl-L-lysyl-[protein] + malonyl-CoA. Its pathway is lipid metabolism; malonyl-CoA biosynthesis; malonyl-CoA from acetyl-CoA: step 1/1. Its function is as follows. Component of the acetyl coenzyme A carboxylase (ACC) complex. First, biotin carboxylase catalyzes the carboxylation of biotin on its carrier protein (BCCP) and then the CO(2) group is transferred by the carboxyltransferase to acetyl-CoA to form malonyl-CoA. This chain is Acetyl-coenzyme A carboxylase carboxyl transferase subunit alpha, found in Desulfitobacterium hafniense (strain DSM 10664 / DCB-2).